A 144-amino-acid chain; its full sequence is Macromomycin (144 aa).

The N-terminal stretch at 1-32 (MLQNTSRFLARAGATVGVAAGLAFSLPADRDG) is a signal peptide. 2 disulfide bridges follow: Cys-68–Cys-78 and Cys-120–Cys-125.

It belongs to the neocarzinostatin family.

Functionally, binds non-covalently to a chromophore which is the cytotoxic and mutagenic component of the antibiotic. The chromophore binds to DNA as a weak intercalator and causes single- and double-strand breaks. The chain is Macromomycin from Streptomyces macromomyceticus.